Reading from the N-terminus, the 882-residue chain is Valine--tRNA ligase (882 aa).

The 'HIGH' region signature appears at Pro-45–His-55. The 'KMSKS' region signature appears at Lys-519 to Ser-523. Position 522 (Lys-522) interacts with ATP. A coiled-coil region spans residues Leu-808–Lys-882.

It belongs to the class-I aminoacyl-tRNA synthetase family. ValS type 1 subfamily. Monomer.

Its subcellular location is the cytoplasm. The enzyme catalyses tRNA(Val) + L-valine + ATP = L-valyl-tRNA(Val) + AMP + diphosphate. In terms of biological role, catalyzes the attachment of valine to tRNA(Val). As ValRS can inadvertently accommodate and process structurally similar amino acids such as threonine, to avoid such errors, it has a 'posttransfer' editing activity that hydrolyzes mischarged Thr-tRNA(Val) in a tRNA-dependent manner. In Streptococcus pyogenes serotype M3 (strain ATCC BAA-595 / MGAS315), this protein is Valine--tRNA ligase.